We begin with the raw amino-acid sequence, 216 residues long: Ribosomal RNA small subunit methyltransferase G (216 aa).

Residues Gly83, Met88, 134 to 135 (VE), and Arg149 contribute to the S-adenosyl-L-methionine site.

This sequence belongs to the methyltransferase superfamily. RNA methyltransferase RsmG family.

It localises to the cytoplasm. The catalysed reaction is guanosine(527) in 16S rRNA + S-adenosyl-L-methionine = N(7)-methylguanosine(527) in 16S rRNA + S-adenosyl-L-homocysteine. Its function is as follows. Specifically methylates the N7 position of guanine in position 527 of 16S rRNA. This is Ribosomal RNA small subunit methyltransferase G from Pseudomonas entomophila (strain L48).